Here is a 178-residue protein sequence, read N- to C-terminus: Nicotinamide-nucleotide adenylyltransferase (178 aa).

The protein belongs to the archaeal NMN adenylyltransferase family.

The protein resides in the cytoplasm. It catalyses the reaction beta-nicotinamide D-ribonucleotide + ATP + H(+) = diphosphate + NAD(+). Its pathway is cofactor biosynthesis; NAD(+) biosynthesis; NAD(+) from nicotinamide D-ribonucleotide: step 1/1. This chain is Nicotinamide-nucleotide adenylyltransferase, found in Pyrobaculum aerophilum (strain ATCC 51768 / DSM 7523 / JCM 9630 / CIP 104966 / NBRC 100827 / IM2).